A 61-amino-acid chain; its full sequence is Large ribosomal subunit protein bL32 (61 aa).

Residues 1–16 (MAVPRRKTSPSRRGMR) show a composition bias toward basic residues. The tract at residues 1-61 (MAVPRRKTSP…RQVLKAKSDS (61 aa)) is disordered. Over residues 27 to 44 (YAEDKDSGELRRPHHLDL) the composition is skewed to basic and acidic residues.

It belongs to the bacterial ribosomal protein bL32 family.

This Nitrobacter winogradskyi (strain ATCC 25391 / DSM 10237 / CIP 104748 / NCIMB 11846 / Nb-255) protein is Large ribosomal subunit protein bL32.